Reading from the N-terminus, the 237-residue chain is Ribonuclease PH (237 aa).

Residues Arg-86 and 124 to 126 each bind phosphate; that span reads GTR.

The protein belongs to the RNase PH family. As to quaternary structure, homohexameric ring arranged as a trimer of dimers.

The enzyme catalyses tRNA(n+1) + phosphate = tRNA(n) + a ribonucleoside 5'-diphosphate. Phosphorolytic 3'-5' exoribonuclease that plays an important role in tRNA 3'-end maturation. Removes nucleotide residues following the 3'-CCA terminus of tRNAs; can also add nucleotides to the ends of RNA molecules by using nucleoside diphosphates as substrates, but this may not be physiologically important. Probably plays a role in initiation of 16S rRNA degradation (leading to ribosome degradation) during starvation. This is Ribonuclease PH from Shewanella baltica (strain OS223).